Here is a 518-residue protein sequence, read N- to C-terminus: 2-isopropylmalate synthase (518 aa).

The Pyruvate carboxyltransferase domain occupies 5–267; that stretch reads VIIFDTTLRD…STKIKHKEIY (263 aa). 4 residues coordinate Mn(2+): Asp-14, His-202, His-204, and Asn-238. A regulatory domain region spans residues 392–518; sequence SLSFFSVQSI…KLKKLKKINN (127 aa).

Belongs to the alpha-IPM synthase/homocitrate synthase family. LeuA type 1 subfamily. In terms of assembly, homodimer. Mn(2+) serves as cofactor.

Its subcellular location is the cytoplasm. It catalyses the reaction 3-methyl-2-oxobutanoate + acetyl-CoA + H2O = (2S)-2-isopropylmalate + CoA + H(+). It functions in the pathway amino-acid biosynthesis; L-leucine biosynthesis; L-leucine from 3-methyl-2-oxobutanoate: step 1/4. Its function is as follows. Catalyzes the condensation of the acetyl group of acetyl-CoA with 3-methyl-2-oxobutanoate (2-ketoisovalerate) to form 3-carboxy-3-hydroxy-4-methylpentanoate (2-isopropylmalate). The chain is 2-isopropylmalate synthase from Buchnera aphidicola subsp. Rhopalosiphum padi.